Consider the following 192-residue polypeptide: Peptidyl-tRNA hydrolase (192 aa).

Y17 lines the tRNA pocket. The active-site Proton acceptor is the H22. Y68, N70, and N116 together coordinate tRNA.

This sequence belongs to the PTH family. Monomer.

The protein localises to the cytoplasm. It catalyses the reaction an N-acyl-L-alpha-aminoacyl-tRNA + H2O = an N-acyl-L-amino acid + a tRNA + H(+). Hydrolyzes ribosome-free peptidyl-tRNAs (with 1 or more amino acids incorporated), which drop off the ribosome during protein synthesis, or as a result of ribosome stalling. Functionally, catalyzes the release of premature peptidyl moieties from peptidyl-tRNA molecules trapped in stalled 50S ribosomal subunits, and thus maintains levels of free tRNAs and 50S ribosomes. The protein is Peptidyl-tRNA hydrolase of Mycobacterium sp. (strain JLS).